A 294-amino-acid polypeptide reads, in one-letter code: Nucleophosmin (294 aa).

Position 1 is an N-acetylmethionine (Met-1). Positions 1–117 (MEDSMDMDMS…PVHISGQHLV (117 aa)) are necessary for interaction with APEX1. The segment at 1–186 (MEDSMDMDMS…DDDDFDDEEA (186 aa)) is required for interaction with SENP3. The residue at position 4 (Ser-4) is a Phosphoserine; by PLK1 and PLK2. Position 10 is a phosphoserine (Ser-10). Residue Lys-27 forms a Glycyl lysine isopeptide (Lys-Gly) (interchain with G-Cter in SUMO2) linkage. Lys-32 is modified (N6-acetyllysine; alternate). Lys-32 participates in a covalent cross-link: Glycyl lysine isopeptide (Lys-Gly) (interchain with G-Cter in SUMO1); alternate. Lys-32 is covalently cross-linked (Glycyl lysine isopeptide (Lys-Gly) (interchain with G-Cter in SUMO2); alternate). Ser-43 carries the post-translational modification Phosphoserine. The residue at position 67 (Tyr-67) is a Phosphotyrosine. Phosphoserine is present on Ser-70. Thr-75 and Thr-95 each carry phosphothreonine. Residues 120–132 (EEDAESEDEEEED) are compositionally biased toward acidic residues. The disordered stretch occupies residues 120–247 (EEDAESEDEE…PKGPSSVEDI (128 aa)). Ser-125 is subject to Phosphoserine; by CDK2. Ser-137 and Ser-139 each carry phosphoserine. A Glycyl lysine isopeptide (Lys-Gly) (interchain with G-Cter in SUMO2) cross-link involves residue Lys-141. The residue at position 150 (Lys-150) is an N6-acetyllysine; alternate. Lys-150 is covalently cross-linked (Glycyl lysine isopeptide (Lys-Gly) (interchain with G-Cter in SUMO2); alternate). The short motif at 152–157 (PQKKVK) is the Nuclear localization signal element. Lys-154 carries the post-translational modification N6-acetyllysine. The span at 161–187 (DEDDDDDDEEDDDEDDDDDDFDDEEAE) shows a compositional bias: acidic residues. Residues 187 to 215 (EEKAPVKKSIRDTPAKNAQKSNQNGKDSK) form an interaction with NOP2 region. Basic and acidic residues predominate over residues 188-200 (EKAPVKKSIRDTP). A Nuclear localization signal motif is present at residues 191-197 (PVKKSIR). At Thr-199 the chain carries Phosphothreonine; by CDK1, CDK2 and CDK6. Residues 202-222 (KNAQKSNQNGKDSKPSSTPRS) are compositionally biased toward polar residues. Residue Ser-207 is modified to ADP-ribosylserine. Position 212 is an N6-acetyllysine (Lys-212). Lys-215 is covalently cross-linked (Glycyl lysine isopeptide (Lys-Gly) (interchain with G-Cter in SUMO2)). At Thr-219 the chain carries Phosphothreonine; by CDK1. A compositionally biased stretch (basic and acidic residues) spans 223-235 (KGQESFKKQEKTP). The residue at position 227 (Ser-227) is a Phosphoserine. Lys-229 bears the N6-acetyllysine mark. Lys-230 is subject to N6-acetyllysine; alternate. Residue Lys-230 forms a Glycyl lysine isopeptide (Lys-Gly) (interchain with G-Cter in SUMO); alternate linkage. Thr-234 and Thr-237 each carry phosphothreonine; by CDK1. Residues Ser-242 and Ser-243 each carry the phosphoserine modification. The interval 243 to 294 (SVEDIKAKMQASIEKGGSLPKVEAKFINYVKNCFRMTDQEAIQDLWQWRKSL) is required for nucleolar localization. Residue Lys-248 forms a Glycyl lysine isopeptide (Lys-Gly) (interchain with G-Cter in SUMO1); alternate linkage. Residues Lys-248 and Lys-250 each participate in a glycyl lysine isopeptide (Lys-Gly) (interchain with G-Cter in SUMO2); alternate cross-link. The residue at position 250 (Lys-250) is an N6-acetyllysine; alternate. The residue at position 254 (Ser-254) is a Phosphoserine. Lys-257 bears the N6-acetyllysine; alternate mark. Residue Lys-257 forms a Glycyl lysine isopeptide (Lys-Gly) (interchain with G-Cter in SUMO1); alternate linkage. Lys-257 participates in a covalent cross-link: Glycyl lysine isopeptide (Lys-Gly) (interchain with G-Cter in SUMO2); alternate. Lys-257 is subject to N6-acetyllysine. Ser-260 is subject to Phosphoserine. Residues Lys-263, Lys-267, and Lys-273 each participate in a glycyl lysine isopeptide (Lys-Gly) (interchain with G-Cter in SUMO2); alternate cross-link. Lys-263 is covalently cross-linked (Glycyl lysine isopeptide (Lys-Gly) (interchain with G-Cter in SUMO); alternate). An N6-acetyllysine; alternate mark is found at Lys-267 and Lys-273. Lys-267 is covalently cross-linked (Glycyl lysine isopeptide (Lys-Gly) (interchain with G-Cter in SUMO1); alternate). Lys-267 is subject to N6-succinyllysine; alternate. Thr-279 bears the Phosphothreonine mark. Lys-292 is modified (N6-acetyllysine).

Belongs to the nucleoplasmin family. In terms of assembly, decamer formed by two pentameric rings associated in a head-to-head fashion. Disulfide-linked dimers under certain conditions. The SWAP complex consists of NPM1, NCL, PARP1 and SWAP70. Interacts with NSUN2 and SENP3. Interacts with the methylated form of RPS10. Interacts (via N-terminal domain) with APEX1; the interaction is RNA-dependent and decreases in hydrogen peroxide-damaged cells. Interacts with isoform 1 of NEK2. Interacts with ROCK2 and BRCA2. Interacts with RPGR. Interacts with CENPW. Interacts with EIF2AK2/PKR. Interacts with CEBPA (isoform 4). Interacts with DDX31; this interaction prevents interaction between NPM1 and HDM2. Interacts with MYC; competitive with NOP53. Interacts with NOP53; the interaction is direct and competitive with MYC. Interacts with LRRC34. Interacts with RRP1B. Interacts with NPM3. Interacts with ALKBH2. Interacts with TTF1 (via C-terminal region). Interacts with NOP2. Interacts with ARID3C (via REKLES DOMAIN); the interaction mediates ARID3C nuclear shuttling. (Microbial infection) Interacts with hepatitis delta virus S-HDAg. As to quaternary structure, (Microbial infection) Interacts with HTLV1 Rex protein (via N-terminal nuclear localization signal). Post-translationally, acetylated at C-terminal lysine residues, thereby increasing affinity to histones. ADP-ribosylated. In terms of processing, phosphorylated at Ser-4 by PLK1 and PLK2. Phosphorylation at Ser-4 by PLK2 in S phase is required for centriole duplication and is sufficient to trigger centriole replication. Phosphorylation at Ser-4 by PLK1 takes place during mitosis. Phosphorylated by CDK2 at Ser-125 and Thr-199. Phosphorylation at Thr-199 may trigger initiation of centrosome duplication. Phosphorylated by CDK1 at Thr-199, Thr-219, Thr-234 and Thr-237 during cell mitosis. When these four sites are phosphorated, RNA-binding activity seem to be abolished. May be phosphorylated at Ser-70 by NEK2. The Thr-199 phosphorylated form has higher affinity for ROCK2. CDK6 triggers Thr-199 phosphorylation when complexed to Kaposi's sarcoma herpesvirus (KSHV) V-cyclin, leading to viral reactivation by reducing viral LANA levels. Post-translationally, sumoylated by ARF. Ubiquitinated. Ubiquitination leads to proteasomal degradation. Deubiquitinated by USP36.

The protein resides in the nucleus. It is found in the nucleolus. Its subcellular location is the nucleoplasm. The protein localises to the cytoplasm. It localises to the cytoskeleton. The protein resides in the microtubule organizing center. It is found in the centrosome. In terms of biological role, involved in diverse cellular processes such as ribosome biogenesis, centrosome duplication, protein chaperoning, histone assembly, cell proliferation, and regulation of tumor suppressors p53/TP53 and ARF. Binds ribosome presumably to drive ribosome nuclear export. Associated with nucleolar ribonucleoprotein structures and bind single-stranded nucleic acids. Acts as a chaperonin for the core histones H3, H2B and H4. Stimulates APEX1 endonuclease activity on apurinic/apyrimidinic (AP) double-stranded DNA but inhibits APEX1 endonuclease activity on AP single-stranded RNA. May exert a control of APEX1 endonuclease activity within nucleoli devoted to repair AP on rDNA and the removal of oxidized rRNA molecules. In concert with BRCA2, regulates centrosome duplication. Regulates centriole duplication: phosphorylation by PLK2 is able to trigger centriole replication. Negatively regulates the activation of EIF2AK2/PKR and suppresses apoptosis through inhibition of EIF2AK2/PKR autophosphorylation. Antagonizes the inhibitory effect of ATF5 on cell proliferation and relieves ATF5-induced G2/M blockade. In complex with MYC enhances the transcription of MYC target genes. May act as chaperonin or cotransporter in the nucleolar localization of transcription termination factor TTF1. The chain is Nucleophosmin from Homo sapiens (Human).